Here is a 91-residue protein sequence, read N- to C-terminus: Alpha-defensin-related sequence 10 (91 aa).

The first 19 residues, 1–19, serve as a signal peptide directing secretion; sequence MKKLVLLSAFVLLAFQVQA. Positions 20–65 are excised as a propeptide; it reads DSIQNTDEETKTEEQPGEENQAMSVSFGDPEGSALQDAAVGMARPC. Positions 21–52 are disordered; that stretch reads SIQNTDEETKTEEQPGEENQAMSVSFGDPEGS. A run of 7 repeats spans residues 65-67, 68-70, 71-73, 74-76, 77-79, 80-82, and 83-85. Residues 65–85 are 7 X 3 AA tandem repeats of C-P-X; that stretch reads CPPCPSCPSCPWCPMCPRCPS.

The protein belongs to the alpha-defensin family. In terms of tissue distribution, paneth cells of the small bowel.

The protein resides in the secreted. Apparent precursor of a secreted, cationic, proline- and cysteine-rich peptide that contains Cys-Pro-Xaa repeats. Unlike cryptdin, the proposed mature peptide region lacks the structural motif characteristic of defensins. It may have microbicidal activities. The polypeptide is Alpha-defensin-related sequence 10 (Defa-rs10) (Mus musculus (Mouse)).